The primary structure comprises 181 residues: 6,7-dimethyl-8-ribityllumazine synthase 2 (181 aa).

The interval 1–23 (MSLPMTETVTDPAETAPPTAERS) is disordered. 5-amino-6-(D-ribitylamino)uracil contacts are provided by residues Trp40, 74 to 76 (SFE), 98 to 100 (LVV), and Ser129.

This sequence belongs to the DMRL synthase family.

It carries out the reaction (2S)-2-hydroxy-3-oxobutyl phosphate + 5-amino-6-(D-ribitylamino)uracil = 6,7-dimethyl-8-(1-D-ribityl)lumazine + phosphate + 2 H2O + H(+). Its pathway is cofactor biosynthesis; riboflavin biosynthesis; riboflavin from 2-hydroxy-3-oxobutyl phosphate and 5-amino-6-(D-ribitylamino)uracil: step 1/2. In terms of biological role, catalyzes the formation of 6,7-dimethyl-8-ribityllumazine by condensation of 5-amino-6-(D-ribitylamino)uracil with 3,4-dihydroxy-2-butanone 4-phosphate. This is the penultimate step in the biosynthesis of riboflavin. The chain is 6,7-dimethyl-8-ribityllumazine synthase 2 from Rhodopseudomonas palustris (strain ATCC BAA-98 / CGA009).